The chain runs to 454 residues: Aspartate aminotransferase P2, mitochondrial (454 aa).

Residues 1-49 (SSLLSIPSLSLQYNDKLKVGGNSLRFSKEQSNTFSNAKSSCRISMVAAV) constitute a mitochondrion transit peptide. Glycine 86, tryptophan 182, and asparagine 235 together coordinate L-aspartate. Lysine 299 is subject to N6-(pyridoxal phosphate)lysine. L-aspartate is bound at residue arginine 428.

This sequence belongs to the class-I pyridoxal-phosphate-dependent aminotransferase family. As to quaternary structure, homodimer. Pyridoxal 5'-phosphate serves as cofactor.

It localises to the mitochondrion matrix. It catalyses the reaction L-aspartate + 2-oxoglutarate = oxaloacetate + L-glutamate. Important for the metabolism of amino acids and Krebs-cycle related organic acids. In plants, it is involved in nitrogen metabolism and in aspects of carbon and energy metabolism. The polypeptide is Aspartate aminotransferase P2, mitochondrial (Lupinus angustifolius (Narrow-leaved blue lupine)).